A 505-amino-acid chain; its full sequence is Elsinochrome transporter 1 (505 aa).

Over residues 1 to 10 (MALSGLGSGP) the composition is skewed to gly residues. A disordered region spans residues 1 to 25 (MALSGLGSGPEGNPNNHQGKAIPTL). The chain crosses the membrane as a helical span at residues 35 to 55 (FLFSWVSFLVPFWSWYPFSPL). N-linked (GlcNAc...) asparagine glycans are attached at residues Asn64 and Asn80. A disordered region spans residues 221-295 (DTPTGAGKPP…TEKGESLPLT (75 aa)). The segment covering 255-267 (TPSSPDRSSSTNS) has biased composition (low complexity). The next 6 helical transmembrane spans lie at 313 to 333 (VIFSGPTLVLGACYFCTFGAE), 348 to 368 (LGLGLQNAGNLAAIFGLLNIV), 391 to 411 (KALLHTYCVMTGVFCIAIGLA), 417 to 437 (ATLVGLVSGGLAFFLEGANGL), 449 to 469 (VVSGFTGACGNLGGIVFAIVF), and 479 to 499 (VFWIIGAIIIGLQVATCWIKP).

This sequence belongs to the major facilitator superfamily. Nitrate/nitrite porter (TC 2.A.1.8) family.

Its subcellular location is the cell membrane. Major facilitator-type transporter; part of the gene cluster that mediates the biosynthesis of elsinochromes, pigments consisting of at least four interconvertible tautomers (A, B, C and D) that have a core phenolic quinone to which various side chains are attached and which play an important role in fungal pathogenesis. Once elsinochrome is synthesized, it must be exported outside the fungal cells, which is probably accomplished by the ECT1 transporter, to avoid toxicity. The chain is Elsinochrome transporter 1 from Elsinoe fawcettii (Citrus scab fungus).